We begin with the raw amino-acid sequence, 68 residues long: Beta-defensin 1 (68 aa).

The first 21 residues, 1–21, serve as a signal peptide directing secretion; the sequence is MRTSYLLLFTLCLLLSEMASG. Residues 22–32 constitute a propeptide that is removed on maturation; that stretch reads DNFLTGLGHRS. Cystine bridges form between Cys-37/Cys-66, Cys-44/Cys-59, and Cys-49/Cys-67.

This sequence belongs to the beta-defensin family. Monomer. Homodimer.

The protein localises to the secreted. Its subcellular location is the membrane. Its function is as follows. Has bactericidal activity. May act as a ligand for C-C chemokine receptor CCR6. Positively regulates the sperm motility and bactericidal activity in a CCR6-dependent manner. Binds to CCR6 and triggers Ca2+ mobilization in the sperm which is important for its motility. The sequence is that of Beta-defensin 1 (DEFB1) from Allochrocebus preussi (Preuss's monkey).